The chain runs to 545 residues: MIFGELRRLYLIIRVFLSYGLDELIPKTRLALPLRLWRKCLFWMPNCHKDEPLGARLRLALEQLGPVWIKFGQMMSTRRDLFPPHIADQLAMLQDKVAPFDGAQAKKLIEHSLGAPVESQFDDFDIVPLASASIAQVHTATLKENGREVVIKVIRPDILPVIKADMKLIYRLARWVPRLLPDGRRLRPQEVVADYEKTLLDELNLLREAANAIQLRRNFADGQMLYVPEIYSDYCSENMLVMERIYGIPISDVATLEQHGVNMKLLAERGVQVFFTQVFRDSFFHADMHPGNIFVSYEHPEDPQYIGIDCGIVGSLNKEDKRYLAENFIAFFNRDYRKVAELHVDSGWVPADTNVEDFEFAIRTVCEPIFEKPLAEISFGHVLLNLFNTARRFNMEVQPQLVLLQKTLLYVEGVGRQLYPQLDLWKTAKPFLENWIKDQIGIPAIVRALKEKAPYWAEKLPELPELFYDSLRQHKHLQHSVDRLTTDLRGERVRQHQSHYLFGVGATLLLSGTAVVLSRPEWDGLAAGLIAAGVVAWLVGWRKTS.

In terms of domain architecture, Protein kinase spans 123-501 (DFDIVPLASA…RVRQHQSHYL (379 aa)). Residues 129–137 (LASASIAQV) and Lys-152 contribute to the ATP site. Asp-287 (proton acceptor) is an active-site residue. The next 2 helical transmembrane spans lie at 498 to 518 (SHYL…VVLS) and 521 to 541 (EWDG…LVGW).

The protein belongs to the ABC1 family. UbiB subfamily.

The protein localises to the cell inner membrane. The protein operates within cofactor biosynthesis; ubiquinone biosynthesis [regulation]. In terms of biological role, is probably a protein kinase regulator of UbiI activity which is involved in aerobic coenzyme Q (ubiquinone) biosynthesis. This Erwinia tasmaniensis (strain DSM 17950 / CFBP 7177 / CIP 109463 / NCPPB 4357 / Et1/99) protein is Probable protein kinase UbiB.